A 912-amino-acid polypeptide reads, in one-letter code: LPS-assembly protein LptD (912 aa).

A signal peptide spans 1 to 27 (MLYSPLYQSIRLILFGALGLSSLTVSA).

It belongs to the LptD family. As to quaternary structure, component of the lipopolysaccharide transport and assembly complex. Interacts with LptE and LptA.

It localises to the cell outer membrane. Its function is as follows. Together with LptE, is involved in the assembly of lipopolysaccharide (LPS) at the surface of the outer membrane. The sequence is that of LPS-assembly protein LptD from Psychrobacter arcticus (strain DSM 17307 / VKM B-2377 / 273-4).